A 504-amino-acid chain; its full sequence is Histidine--tRNA ligase (504 aa).

The protein belongs to the class-II aminoacyl-tRNA synthetase family. Homodimer.

The protein localises to the cytoplasm. The catalysed reaction is tRNA(His) + L-histidine + ATP = L-histidyl-tRNA(His) + AMP + diphosphate + H(+). In Rhizobium rhizogenes (strain K84 / ATCC BAA-868) (Agrobacterium radiobacter), this protein is Histidine--tRNA ligase.